A 620-amino-acid chain; its full sequence is GTP-binding protein At3g49725, chloroplastic (620 aa).

Residues 1–65 (MSVTTSFGIW…SSFLARDRLR (65 aa)) constitute a chloroplast transit peptide. Residues 57 to 100 (SFLARDRLRSKTPSSSPFSSKRHTPKTSEIEEESTPKDSVLLNP) form a disordered region. The Hflx-type G domain maps to 346–585 (GTIAVVGYTN…LIDDKMKEKK (240 aa)). Residues 352–359 (GYTNAGKS), 377–381 (FATLD), 399–402 (DTVG), and 468–471 (NKID) contribute to the GTP site. The Mg(2+) site is built by Ser359 and Thr379. Acidic residues-rich tracts occupy residues 478 to 497 (EEEK…EDEA) and 511 to 521 (TVDEDQIQNGD). The tract at residues 478–521 (EEEKYLDDGEGVGEEDEDEADLKAEETVDASEATVDEDQIQNGD) is disordered. 563 to 565 (SAL) provides a ligand contact to GTP. Positions 597 to 620 (LHKRKWRPPRNDDEEERLIPLDQR) are disordered.

It belongs to the TRAFAC class OBG-HflX-like GTPase superfamily. HflX GTPase family. Mg(2+) is required as a cofactor.

The protein resides in the plastid. The protein localises to the chloroplast. This is GTP-binding protein At3g49725, chloroplastic from Arabidopsis thaliana (Mouse-ear cress).